A 428-amino-acid polypeptide reads, in one-letter code: Enolase (428 aa).

Glutamine 162 is a (2R)-2-phosphoglycerate binding site. Glutamate 204 functions as the Proton donor in the catalytic mechanism. Mg(2+) contacts are provided by aspartate 241, glutamate 283, and aspartate 310. 4 residues coordinate (2R)-2-phosphoglycerate: lysine 335, arginine 364, serine 365, and lysine 386. Lysine 335 (proton acceptor) is an active-site residue.

It belongs to the enolase family. It depends on Mg(2+) as a cofactor.

It is found in the cytoplasm. Its subcellular location is the secreted. The protein resides in the cell surface. The enzyme catalyses (2R)-2-phosphoglycerate = phosphoenolpyruvate + H2O. Its pathway is carbohydrate degradation; glycolysis; pyruvate from D-glyceraldehyde 3-phosphate: step 4/5. Catalyzes the reversible conversion of 2-phosphoglycerate (2-PG) into phosphoenolpyruvate (PEP). It is essential for the degradation of carbohydrates via glycolysis. The chain is Enolase from Rhodococcus erythropolis (strain PR4 / NBRC 100887).